The primary structure comprises 333 residues: Cap-specific mRNA (nucleoside-2'-O-)-methyltransferase (333 aa).

Tyr22 contacts mRNA. 8 residues coordinate S-adenosyl-L-methionine: Gln39, Tyr66, Gly68, Gly72, Asp95, Arg97, Val116, and Asp138. The tract at residues Pro169–Val249 is binding to NPH-I. Residues Pro169 to Lys333 are binding to Rap94. Lys175 serves as the catalytic For methyltransferase activity. Residues Arg177–Phe180, Asp182, Ser205–Glu207, and Glu233 contribute to the mRNA site.

This sequence belongs to the class I-like SAM-binding methyltransferase superfamily. Poxvirus/kinetoplastid 2'-O-MTase family. In terms of assembly, interacts with poly(A) polymerase catalytic subunit OPG063. Interacts with OPG109 and OPG123; these interactions might help linking transcription to capping and polyadenylation.

Its subcellular location is the virion. It catalyses the reaction a 5'-end (N(7)-methyl 5'-triphosphoguanosine)-ribonucleoside in mRNA + S-adenosyl-L-methionine = a 5'-end (N(7)-methyl 5'-triphosphoguanosine)-(2'-O-methyl-ribonucleoside) in mRNA + S-adenosyl-L-homocysteine + H(+). Displays methyltransferase, positive regulation of the poly(A) polymerase and transcription elongation activities. Involved in the modification of both mRNA ends and in intermediate and late gene positive transcription elongation. At the mRNAs 5' end, methylates the ribose 2' OH group of the first transcribed nucleotide, thereby producing a 2'-O-methylpurine cap. At the 3' end, functions as a processivity factor which stimulates the activity of the viral poly(A) polymerase OPG063 that creates mRNA's poly(A) tail. In the presence of OPG102, OPG063 does not dissociate from the RNA allowing tail elongation to around 250 adenylates. This is Cap-specific mRNA (nucleoside-2'-O-)-methyltransferase (OPG102) from Homo sapiens (Human).